The following is a 599-amino-acid chain: UvrABC system protein C (599 aa).

The 79-residue stretch at 15–93 folds into the GIY-YIG domain; that stretch reads DNPGVYQYYD…IKTLQPRYNI (79 aa). One can recognise a UVR domain in the interval 207–242; that stretch reads KDSMKDFKKVMTNLAQNMHFEEAQKIKEKIEILENY.

This sequence belongs to the UvrC family. Interacts with UvrB in an incision complex.

It localises to the cytoplasm. Its function is as follows. The UvrABC repair system catalyzes the recognition and processing of DNA lesions. UvrC both incises the 5' and 3' sides of the lesion. The N-terminal half is responsible for the 3' incision and the C-terminal half is responsible for the 5' incision. This is UvrABC system protein C from Flavobacterium psychrophilum (strain ATCC 49511 / DSM 21280 / CIP 103535 / JIP02/86).